The sequence spans 131 residues: MVRMSRPLFLDWAWRPLCSPSQSLPLTYGPEGWILQWKGTCRQQTALHCPFDFPQAPLRGRHTLSQVPNKGHEKASAVQLPEKQGTDQSRRGPTSAVTKARTSYPESETFIVYLCSYFWNSSKGVYMSGST.

Residues 60-100 form a disordered region; it reads GRHTLSQVPNKGHEKASAVQLPEKQGTDQSRRGPTSAVTKA. Polar residues predominate over residues 91 to 100; it reads RGPTSAVTKA.

This is an uncharacterized protein from Homo sapiens (Human).